A 90-amino-acid polypeptide reads, in one-letter code: DNA-binding protein HU-beta (90 aa).

It belongs to the bacterial histone-like protein family. As to quaternary structure, heterodimer of an alpha and a beta chain.

Functionally, histone-like DNA-binding protein which is capable of wrapping DNA to stabilize it, and thus to prevent its denaturation under extreme environmental conditions. This Escherichia coli O6:H1 (strain CFT073 / ATCC 700928 / UPEC) protein is DNA-binding protein HU-beta (hupB).